The chain runs to 86 residues: RNA-binding protein Hfq (86 aa).

Residues 9-68 (DPYLNVLRKERIPVSIYLVNGIKLQGQVESFDQFVVLLKNTVSQMVYKHAISTVVPSRPV) form the Sm domain.

It belongs to the Hfq family. As to quaternary structure, homohexamer.

In terms of biological role, RNA chaperone that binds small regulatory RNA (sRNAs) and mRNAs to facilitate mRNA translational regulation in response to envelope stress, environmental stress and changes in metabolite concentrations. Also binds with high specificity to tRNAs. This chain is RNA-binding protein Hfq, found in Saccharophagus degradans (strain 2-40 / ATCC 43961 / DSM 17024).